Reading from the N-terminus, the 203-residue chain is ER membrane protein complex subunit 8/9 homolog (203 aa).

Positions 4-140 constitute an MPN domain; sequence YKVSERAYAK…IQVFNCPGDS (137 aa).

This sequence belongs to the EMC8/EMC9 family. Component of the ER membrane protein complex (EMC).

The protein localises to the endoplasmic reticulum membrane. Part of the endoplasmic reticulum membrane protein complex (EMC) that enables the energy-independent insertion into endoplasmic reticulum membranes of newly synthesized multi-pass membrane proteins like rhodopsins. This Drosophila melanogaster (Fruit fly) protein is ER membrane protein complex subunit 8/9 homolog.